A 256-amino-acid polypeptide reads, in one-letter code: Protein US2 homolog (256 aa).

Disordered stretches follow at residues 100-120 (TRRP…SPPP), 167-186 (STAA…RRRP), and 236-256 (VRRR…CTIS). Over residues 167-180 (STAAGAPGAPTGAR) the composition is skewed to low complexity. Residues 245–256 (NGRERAPRCTIS) are compositionally biased toward basic and acidic residues.

This sequence belongs to the herpesviridae US2 family.

This chain is Protein US2 homolog (28K), found in Sus scrofa (Pig).